The primary structure comprises 276 residues: 2,3,4,5-tetrahydropyridine-2,6-dicarboxylate N-succinyltransferase (276 aa).

Substrate-binding residues include R104 and D141.

It belongs to the transferase hexapeptide repeat family. Homotrimer.

The protein resides in the cytoplasm. The catalysed reaction is (S)-2,3,4,5-tetrahydrodipicolinate + succinyl-CoA + H2O = (S)-2-succinylamino-6-oxoheptanedioate + CoA. It participates in amino-acid biosynthesis; L-lysine biosynthesis via DAP pathway; LL-2,6-diaminopimelate from (S)-tetrahydrodipicolinate (succinylase route): step 1/3. This chain is 2,3,4,5-tetrahydropyridine-2,6-dicarboxylate N-succinyltransferase, found in Legionella pneumophila (strain Corby).